The primary structure comprises 419 residues: Pygopus homolog 1 (419 aa).

Disordered regions lie at residues 1-64 (MPAE…PNSD) and 175-338 (HFRQ…SSSD). A compositionally biased stretch (gly residues) spans 18–30 (GDSGLDGLGGPGV). The Nuclear localization signal motif lies at 35–41 (PDKKKRK). 2 stretches are compositionally biased toward polar residues: residues 175 to 221 (HFRQ…SNHS) and 240 to 255 (DFTQ…NSSA). The span at 276–286 (VNRNNAVNQEN) shows a compositional bias: low complexity. Residues 287–307 (SRSSSTEATNNNPANGTQNKP) are compositionally biased toward polar residues. Residues 340–398 (VYPCGICTNEVNDDQDAILCEASCQKWFHRICTGMTETAYGLLTAEASAVWGCDTCMAD) form a PHD-type zinc finger. An interaction with H3K4me2 region spans residues 341–388 (YPCGICTNEVNDDQDAILCEASCQKWFHRICTGMTETAYGLLTAEASA). The interval 373 to 391 (GMTETAYGLLTAEASAVWG) is interaction with BCL9.

As to quaternary structure, interacts with BCL9 via The PHD-type zinc finger motiv, and thereby becomes part of the nuclear beta-catenin/TCF complex. Identified in a complex with BCL9L, CDC73, CTNNB1 and PYGO1. Interacts with histone H3 mono-, di- or tri-methylated at 'Lys4' (H3K4me1, H3K4me2, H3K4me3); the interaction is enhanced by the interaction with BCL9.

It localises to the nucleus. Its function is as follows. Involved in signal transduction through the Wnt pathway. The chain is Pygopus homolog 1 (PYGO1) from Homo sapiens (Human).